The primary structure comprises 487 residues: NADH-quinone oxidoreductase subunit N (487 aa).

Transmembrane regions (helical) follow at residues valine 16 to phenylalanine 36, leucine 45 to glycine 65, asparagine 79 to serine 99, glycine 111 to threonine 131, leucine 133 to phenylalanine 153, phenylalanine 168 to valine 188, leucine 212 to phenylalanine 232, alanine 257 to alanine 276, leucine 281 to leucine 298, methionine 306 to threonine 326, isoleucine 333 to leucine 353, alanine 378 to isoleucine 398, isoleucine 413 to valine 435, and leucine 457 to leucine 477.

It belongs to the complex I subunit 2 family. As to quaternary structure, NDH-1 is composed of 14 different subunits. Subunits NuoA, H, J, K, L, M, N constitute the membrane sector of the complex.

The protein resides in the cell inner membrane. It carries out the reaction a quinone + NADH + 5 H(+)(in) = a quinol + NAD(+) + 4 H(+)(out). Its function is as follows. NDH-1 shuttles electrons from NADH, via FMN and iron-sulfur (Fe-S) centers, to quinones in the respiratory chain. The immediate electron acceptor for the enzyme in this species is believed to be ubiquinone. Couples the redox reaction to proton translocation (for every two electrons transferred, four hydrogen ions are translocated across the cytoplasmic membrane), and thus conserves the redox energy in a proton gradient. In Trichlorobacter lovleyi (strain ATCC BAA-1151 / DSM 17278 / SZ) (Geobacter lovleyi), this protein is NADH-quinone oxidoreductase subunit N.